The following is a 415-amino-acid chain: MYSPDTTKYLIHISLTAEGVVEKPDVVGAIFGQTEGLLGEDLDLRDLQRTGRVGRIDVQIASKKGETSGEILISTSLDRAETAILAASLETIDRVGPCVAHVSVKMVEDIRVSKRKKIVERAKEILVERFDDGTIDSDELLDDVRQTLRVEKIGTIGEEKLPAGPNVLESDAIIIVEGRADVINLLRYGIKNTVAVEGTNIPKSIVELTEKKTTTAFFDGDRGGELILRELLQVADIDFVAFSPRGKSVEDMSKKEVIKTLRNKVPVEYVRDQYFEDSAELPGDLGGRPARTAPAHDEGGNSDTTGKQAVSQKRIRDGTSKVPTTLRDHMDDVKGKNVARFLNQDMVVIRESRSEEVEKAVETLEEPAAGVVVDRTVDQKLLDRLVWKGLEYVAAKDFKGIIKRPLNIRLMKMSS.

Positions 171–250 (DAIIIVEGRA…AFSPRGKSVE (80 aa)) constitute a Toprim domain. Mg(2+) contacts are provided by Glu177, Asp219, and Asp221. Residues 280-323 (ELPGDLGGRPARTAPAHDEGGNSDTTGKQAVSQKRIRDGTSKVP) form a disordered region. A compositionally biased stretch (polar residues) spans 301-311 (NSDTTGKQAVS).

This sequence belongs to the archaeal DnaG primase family. In terms of assembly, forms a ternary complex with MCM helicase and DNA. Mg(2+) is required as a cofactor.

It carries out the reaction ssDNA + n NTP = ssDNA/pppN(pN)n-1 hybrid + (n-1) diphosphate.. Functionally, RNA polymerase that catalyzes the synthesis of short RNA molecules used as primers for DNA polymerase during DNA replication. The chain is DNA primase DnaG from Methanoregula boonei (strain DSM 21154 / JCM 14090 / 6A8).